Consider the following 101-residue polypeptide: MNKLTIIFFTILLLTYIIVEKEALKIEDLPEPESYKKAKQLAVKDANGDKRAEGIALDFLRQNRRNCTVNCDLVLTCPLLTPECCPKKNDDCLKLDTVKNG.

A signal peptide spans 1–23 (MNKLTIIFFTILLLTYIIVEKEA).

In terms of processing, contains 3 disulfide bonds. Expressed by the venom gland.

The protein resides in the secreted. In terms of biological role, voltage-gated calcium channel inhibitor. This is Omega-scoloptoxin(10)-Ssd1b from Scolopendra dehaani (Thai centipede).